Consider the following 178-residue polypeptide: Membrane-spanning protein YciB (178 aa).

The next 5 membrane-spanning stretches (helical) occupy residues 22–42, 52–72, 76–96, 121–141, and 151–171; these read IFIA…ITSI, LINL…HNSS, WKVT…YLFI, LFWS…ILYF, and IFGL…YIYF.

This sequence belongs to the YciB family.

It is found in the cell membrane. Its function is as follows. Plays a role in cell envelope biogenesis, maintenance of cell envelope integrity and membrane homeostasis. The polypeptide is Membrane-spanning protein YciB (Buchnera aphidicola subsp. Baizongia pistaciae (strain Bp)).